A 381-amino-acid polypeptide reads, in one-letter code: Probable tRNA sulfurtransferase (381 aa).

The 109-residue stretch at 68-176 (DLALKLLKKV…NDGAYIFTEK (109 aa)) folds into the THUMP domain. ATP contacts are provided by residues 194 to 195 (LI), K276, G298, and Q307.

The protein belongs to the ThiI family.

It localises to the cytoplasm. It carries out the reaction [ThiI sulfur-carrier protein]-S-sulfanyl-L-cysteine + a uridine in tRNA + 2 reduced [2Fe-2S]-[ferredoxin] + ATP + H(+) = [ThiI sulfur-carrier protein]-L-cysteine + a 4-thiouridine in tRNA + 2 oxidized [2Fe-2S]-[ferredoxin] + AMP + diphosphate. The enzyme catalyses [ThiS sulfur-carrier protein]-C-terminal Gly-Gly-AMP + S-sulfanyl-L-cysteinyl-[cysteine desulfurase] + AH2 = [ThiS sulfur-carrier protein]-C-terminal-Gly-aminoethanethioate + L-cysteinyl-[cysteine desulfurase] + A + AMP + 2 H(+). Its pathway is cofactor biosynthesis; thiamine diphosphate biosynthesis. In terms of biological role, catalyzes the ATP-dependent transfer of a sulfur to tRNA to produce 4-thiouridine in position 8 of tRNAs, which functions as a near-UV photosensor. Also catalyzes the transfer of sulfur to the sulfur carrier protein ThiS, forming ThiS-thiocarboxylate. This is a step in the synthesis of thiazole, in the thiamine biosynthesis pathway. The sulfur is donated as persulfide by IscS. This Methanocaldococcus jannaschii (strain ATCC 43067 / DSM 2661 / JAL-1 / JCM 10045 / NBRC 100440) (Methanococcus jannaschii) protein is Probable tRNA sulfurtransferase.